Reading from the N-terminus, the 456-residue chain is Cyclic AMP-responsive element-binding protein 3-like protein 3 (456 aa).

2 disordered regions span residues 1-20 (MDGD…MGPI) and 47-120 (GHGE…KGPC). Residues 1–317 (MDGDLAIGKM…STSKSAQTGT (317 aa)) lie on the Cytoplasmic side of the membrane. Residues 71–85 (DSDSPTWSPAASDSG) are compositionally biased toward polar residues. Positions 238–301 (MLKKIRRKIR…LSLLEQLKKL (64 aa)) constitute a bZIP domain. The segment at 240 to 269 (KKIRRKIRNKQSAQESRKKKKEYIDGLETR) is basic motif. The segment at 280-301 (LQRKVLHLEKQNLSLLEQLKKL) is leucine-zipper. Lys-289 is covalently cross-linked (Glycyl lysine isopeptide (Lys-Gly) (interchain with G-Cter in ubiquitin)). The chain crosses the membrane as a helical; Signal-anchor for type II membrane protein span at residues 318 to 338 (CIAVLLFSFALIVLPSISPFA). Over 339 to 456 (SNRAESPGDF…VGLEAAGGEL (118 aa)) the chain is Lumenal. 2 disordered regions span residues 365 to 423 (RVAP…QGNS) and 435 to 456 (CAPP…GGEL). N-linked (GlcNAc...) asparagine glycosylation is found at Asn-408 and Asn-415.

Belongs to the bZIP family. ATF subfamily. As to quaternary structure, binds DNA as a dimer. May form homodimers. Interacts with ATF6. Interacts with SYNV1/HRD1; this interaction leads to CREB3L3 ubiquitination and proteasomal degradation. Controlled by regulated intramembrane proteolysis (RIP). Following ER stress a fragment containing the cytoplasmic transcription factor domain is released by proteolysis. The cleavage seems to be performed sequentially by site-1 and site-2 proteases (PS1 and PS2). In terms of processing, N-glycosylation is required for optimal proteolytic activation. Post-translationally, ubiquitinated at Lys-289 by SYNV1/HRD1 via 'Lys-27'-linked ubiquitin.

It is found in the endoplasmic reticulum membrane. The protein resides in the nucleus. Functionally, transcription factor that may act during endoplasmic reticulum stress by activating unfolded protein response target genes. Activated in response to cAMP stimulation. In vitro, binds the cAMP response element (CRE). Activates transcription through box-B element and CRE. Seems to function synergistically with ATF6. In acute inflammatory response, may activate expression of acute phase response (APR) genes. May be involved in growth suppression. Regulates FGF21 transcription. Plays a crucial role in the regulation of triglyceride metabolism and is required for the maintenance of normal plasma triglyceride concentrations. The chain is Cyclic AMP-responsive element-binding protein 3-like protein 3 (CREB3L3) from Bos taurus (Bovine).